The primary structure comprises 351 residues: MTSSSPILKQTPKFLSALEGQSHANPPVWFMRQAGRYLPEYRAVRATAPDFISFCFDPEKAAEVTLQPMRRFPFDASIVFADILLIPGALGQKVWFEAGEGPKLGDMPSVESMAEKAGEAGKALSLVGETLTRVRSALDPDKALIGFAGAPWTVATYMIEKGSSDRSGARTFAYQNPETLDALIQVLVDATIDYLAMQVDAGAQALKLFESWAEGLSEPLFDRLVTQPHIRIIEGLRARGVTVPIIGFPRGAGTLVEDYAARTPVQGVALDTSASAKLGQTIQKTKTIQGALDPLLLRAGGDALLKRVDEMLEQWNQGPYIFNLGHGILPDTPIAHVEAVLERVTGQKVGQ.

Substrate is bound by residues Arg32–Arg36, Phe51, Asp82, Tyr157, Ser211, and His326.

This sequence belongs to the uroporphyrinogen decarboxylase family. As to quaternary structure, homodimer.

The protein localises to the cytoplasm. It carries out the reaction uroporphyrinogen III + 4 H(+) = coproporphyrinogen III + 4 CO2. Its pathway is porphyrin-containing compound metabolism; protoporphyrin-IX biosynthesis; coproporphyrinogen-III from 5-aminolevulinate: step 4/4. Catalyzes the decarboxylation of four acetate groups of uroporphyrinogen III to yield coproporphyrinogen III. This chain is Uroporphyrinogen decarboxylase, found in Caulobacter vibrioides (strain ATCC 19089 / CIP 103742 / CB 15) (Caulobacter crescentus).